We begin with the raw amino-acid sequence, 227 residues long: Cytochrome c oxidase subunit 2 (227 aa).

The Mitochondrial intermembrane segment spans residues 1–14 (MAYPFQLGLQDATS). A helical transmembrane segment spans residues 15–45 (PIMEELLHFHDHALMIVFLISSLVLYIISLM). Residues 46–59 (LTTKLTHTSTMDAQ) lie on the Mitochondrial matrix side of the membrane. A helical membrane pass occupies residues 60–87 (EVETVWTILPAIILILIALPSLRILYMM). Residues 88-227 (DEINNPSLTV…YFETWSALMV (140 aa)) are Mitochondrial intermembrane-facing. Cu cation is bound by residues His161, Cys196, Glu198, Cys200, His204, and Met207. Glu198 is a Mg(2+) binding site. Phosphotyrosine is present on Tyr218.

This sequence belongs to the cytochrome c oxidase subunit 2 family. As to quaternary structure, component of the cytochrome c oxidase (complex IV, CIV), a multisubunit enzyme composed of 14 subunits. The complex is composed of a catalytic core of 3 subunits MT-CO1, MT-CO2 and MT-CO3, encoded in the mitochondrial DNA, and 11 supernumerary subunits COX4I, COX5A, COX5B, COX6A, COX6B, COX6C, COX7A, COX7B, COX7C, COX8 and NDUFA4, which are encoded in the nuclear genome. The complex exists as a monomer or a dimer and forms supercomplexes (SCs) in the inner mitochondrial membrane with NADH-ubiquinone oxidoreductase (complex I, CI) and ubiquinol-cytochrome c oxidoreductase (cytochrome b-c1 complex, complex III, CIII), resulting in different assemblies (supercomplex SCI(1)III(2)IV(1) and megacomplex MCI(2)III(2)IV(2)). Found in a complex with TMEM177, COA6, COX18, COX20, SCO1 and SCO2. Interacts with TMEM177 in a COX20-dependent manner. Interacts with COX20. Interacts with COX16. Requires Cu cation as cofactor.

The protein localises to the mitochondrion inner membrane. The catalysed reaction is 4 Fe(II)-[cytochrome c] + O2 + 8 H(+)(in) = 4 Fe(III)-[cytochrome c] + 2 H2O + 4 H(+)(out). Functionally, component of the cytochrome c oxidase, the last enzyme in the mitochondrial electron transport chain which drives oxidative phosphorylation. The respiratory chain contains 3 multisubunit complexes succinate dehydrogenase (complex II, CII), ubiquinol-cytochrome c oxidoreductase (cytochrome b-c1 complex, complex III, CIII) and cytochrome c oxidase (complex IV, CIV), that cooperate to transfer electrons derived from NADH and succinate to molecular oxygen, creating an electrochemical gradient over the inner membrane that drives transmembrane transport and the ATP synthase. Cytochrome c oxidase is the component of the respiratory chain that catalyzes the reduction of oxygen to water. Electrons originating from reduced cytochrome c in the intermembrane space (IMS) are transferred via the dinuclear copper A center (CU(A)) of subunit 2 and heme A of subunit 1 to the active site in subunit 1, a binuclear center (BNC) formed by heme A3 and copper B (CU(B)). The BNC reduces molecular oxygen to 2 water molecules using 4 electrons from cytochrome c in the IMS and 4 protons from the mitochondrial matrix. The polypeptide is Cytochrome c oxidase subunit 2 (MT-CO2) (Canis aureus (Golden jackal)).